Consider the following 216-residue polypeptide: Uracil phosphoribosyltransferase (216 aa).

A GTP-binding site is contributed by 30–34; sequence KNLVR. 5-phospho-alpha-D-ribose 1-diphosphate is bound by residues arginine 80, arginine 105, and 140–148; that span reads DPMIATAST. Uracil contacts are provided by residues isoleucine 203 and 208–210; that span reads GDA. Aspartate 209 contributes to the 5-phospho-alpha-D-ribose 1-diphosphate binding site.

It belongs to the UPRTase family. Mg(2+) is required as a cofactor.

It catalyses the reaction UMP + diphosphate = 5-phospho-alpha-D-ribose 1-diphosphate + uracil. Its pathway is pyrimidine metabolism; UMP biosynthesis via salvage pathway; UMP from uracil: step 1/1. Allosterically activated by GTP. Functionally, catalyzes the conversion of uracil and 5-phospho-alpha-D-ribose 1-diphosphate (PRPP) to UMP and diphosphate. In Saccharolobus islandicus (strain M.16.4 / Kamchatka #3) (Sulfolobus islandicus), this protein is Uracil phosphoribosyltransferase.